An 818-amino-acid polypeptide reads, in one-letter code: Myosin-A (818 aa).

Ser19 carries the post-translational modification Phosphoserine; by PKG. The Myosin motor domain occupies 97–771 (MSFGDIGLLN…GAKILTKIQR (675 aa)). An ATP-binding site is contributed by 191–198 (GESGAGKT). Residues 661-671 (PHFIRCIKPNE) are actin-binding. Positions 773 to 818 (KLVEWENCVSVIEAAILKHKYKQKVNKNIPSLLRVQAHIRKKMVAQ) are tail.

It belongs to the TRAFAC class myosin-kinesin ATPase superfamily. Myosin family. Component of the glideosome complex composed of GAP50, GAP45, MTIP and MyoA; the complex is formed during the late schizont stage and in merozoites. MyoA, MTIP and GAP45 probably form an initial complex in the cytoplasm which is then recruited to the outer face of the inner membrane complex via the interaction with GAP50. Interacts with ACT1.

It localises to the cell membrane. Its function is as follows. Myosins are actin-based motor molecules with ATPase activity. Unconventional myosins serve in intracellular movements. Their highly divergent tails are presumed to bind to membranous compartments, which would be moved relative to actin filaments. This chain is Myosin-A, found in Plasmodium falciparum (isolate 3D7).